The following is a 139-amino-acid chain: Endoribonuclease YbeY (139 aa).

His-107, His-111, and Asp-117 together coordinate Zn(2+).

Belongs to the endoribonuclease YbeY family. Requires Zn(2+) as cofactor.

The protein localises to the cytoplasm. In terms of biological role, single strand-specific metallo-endoribonuclease involved in late-stage 70S ribosome quality control and in maturation of the 3' terminus of the 16S rRNA. This is Endoribonuclease YbeY from Azobacteroides pseudotrichonymphae genomovar. CFP2.